Consider the following 165-residue polypeptide: Phosphopantetheine adenylyltransferase (165 aa).

A substrate-binding site is contributed by Ser-9. Residues 9–10 (SF) and His-17 contribute to the ATP site. Positions 41, 75, and 89 each coordinate substrate. ATP is bound by residues 90–92 (GVR), Glu-100, and 125–131 (YLFVRSD).

It belongs to the bacterial CoaD family. In terms of assembly, homohexamer. Mg(2+) serves as cofactor.

The protein resides in the cytoplasm. The enzyme catalyses (R)-4'-phosphopantetheine + ATP + H(+) = 3'-dephospho-CoA + diphosphate. Its pathway is cofactor biosynthesis; coenzyme A biosynthesis; CoA from (R)-pantothenate: step 4/5. In terms of biological role, reversibly transfers an adenylyl group from ATP to 4'-phosphopantetheine, yielding dephospho-CoA (dPCoA) and pyrophosphate. This chain is Phosphopantetheine adenylyltransferase, found in Borrelia turicatae (strain 91E135).